We begin with the raw amino-acid sequence, 325 residues long: Lipoyl synthase (325 aa).

Positions 66, 71, 77, 92, 96, 99, and 303 each coordinate [4Fe-4S] cluster. The Radical SAM core domain occupies 78 to 292 (WEDREATFLI…AQFAEGLGFA (215 aa)).

Belongs to the radical SAM superfamily. Lipoyl synthase family. The cofactor is [4Fe-4S] cluster.

Its subcellular location is the cytoplasm. The catalysed reaction is [[Fe-S] cluster scaffold protein carrying a second [4Fe-4S](2+) cluster] + N(6)-octanoyl-L-lysyl-[protein] + 2 oxidized [2Fe-2S]-[ferredoxin] + 2 S-adenosyl-L-methionine + 4 H(+) = [[Fe-S] cluster scaffold protein] + N(6)-[(R)-dihydrolipoyl]-L-lysyl-[protein] + 4 Fe(3+) + 2 hydrogen sulfide + 2 5'-deoxyadenosine + 2 L-methionine + 2 reduced [2Fe-2S]-[ferredoxin]. The protein operates within protein modification; protein lipoylation via endogenous pathway; protein N(6)-(lipoyl)lysine from octanoyl-[acyl-carrier-protein]: step 2/2. Catalyzes the radical-mediated insertion of two sulfur atoms into the C-6 and C-8 positions of the octanoyl moiety bound to the lipoyl domains of lipoate-dependent enzymes, thereby converting the octanoylated domains into lipoylated derivatives. This Mycobacterium sp. (strain JLS) protein is Lipoyl synthase.